The chain runs to 397 residues: Elongation factor Tu (397 aa).

Residues 10–207 (KPHVNIGTIG…AVDESIPEPV (198 aa)) form the tr-type G domain. The tract at residues 19–26 (GHVDHGKT) is G1. 19 to 26 (GHVDHGKT) serves as a coordination point for GTP. Mg(2+) is bound at residue threonine 26. Residues 63–67 (GITIN) form a G2 region. The tract at residues 84-87 (DAPG) is G3. GTP is bound by residues 84-88 (DAPGH) and 139-142 (NKSD). The segment at 139–142 (NKSD) is G4. The tract at residues 177–179 (SGL) is G5.

This sequence belongs to the TRAFAC class translation factor GTPase superfamily. Classic translation factor GTPase family. EF-Tu/EF-1A subfamily. As to quaternary structure, monomer.

Its subcellular location is the cytoplasm. The enzyme catalyses GTP + H2O = GDP + phosphate + H(+). Its function is as follows. GTP hydrolase that promotes the GTP-dependent binding of aminoacyl-tRNA to the A-site of ribosomes during protein biosynthesis. This Clavibacter sepedonicus (Clavibacter michiganensis subsp. sepedonicus) protein is Elongation factor Tu.